Reading from the N-terminus, the 103-residue chain is Large ribosomal subunit protein uL24 (103 aa).

This sequence belongs to the universal ribosomal protein uL24 family. In terms of assembly, part of the 50S ribosomal subunit.

Its function is as follows. One of two assembly initiator proteins, it binds directly to the 5'-end of the 23S rRNA, where it nucleates assembly of the 50S subunit. One of the proteins that surrounds the polypeptide exit tunnel on the outside of the subunit. In Corynebacterium urealyticum (strain ATCC 43042 / DSM 7109), this protein is Large ribosomal subunit protein uL24.